The primary structure comprises 100 residues: Small ribosomal subunit protein uS14c (100 aa).

Belongs to the universal ribosomal protein uS14 family. As to quaternary structure, part of the 30S ribosomal subunit.

Its subcellular location is the plastid. The protein resides in the chloroplast. In terms of biological role, binds 16S rRNA, required for the assembly of 30S particles. The protein is Small ribosomal subunit protein uS14c of Ostreococcus tauri.